The primary structure comprises 624 residues: Kelch-like ECH-associated protein 1 (624 aa).

S-(2-succinyl)cysteine is present on cysteine 38. Residues 77–149 enclose the BTB domain; sequence CDVTLQVKYE…AYTASISVGE (73 aa). Arginine 135 participates in a covalent cross-link: N5-[4-(S-L-cysteinyl)-5-methyl-1H-imidazol-2-yl]-L-ornithine (Arg-Cys) (interchain with C-151 in KEAP1). Residues cysteine 151 and cysteine 241 each carry the S-(2-succinyl)cysteine modification. Position 151 is an S-(2,3-dicarboxypropyl)cysteine; alternate (cysteine 151). Position 151 is an S-nitrosocysteine; alternate (cysteine 151). Cysteine 151 participates in a covalent cross-link: N5-[4-(S-L-cysteinyl)-5-methyl-1H-imidazol-2-yl]-L-ornithine (Cys-Arg) (interchain with R-135 in KEAP1). The BACK domain occupies 184-286; sequence AIGIANFAEQ…TPRFLQTQLQ (103 aa). An S-(2,3-dicarboxypropyl)cysteine mark is found at cysteine 257 and cysteine 273. An S-(2-succinyl)cysteine mark is found at cysteine 288 and cysteine 319. Cysteine 288 is subject to S-(2,3-dicarboxypropyl)cysteine; alternate. 6 Kelch repeats span residues 327–372, 373–423, 424–470, 471–517, 519–564, and 565–611; these read LIYT…VVGG, LLYA…VIDG, HIYA…VLNR, LLYA…VLHS, IYAA…VHQG, and RIYV…VTME. Residue cysteine 434 is modified to S-cGMP-cysteine. Cysteine 613 is modified (S-(2-succinyl)cysteine).

The protein belongs to the KEAP1 family. As to quaternary structure, component of the BCR(KEAP1) E3 ubiquitin ligase complex, at least composed of 2 molecules of CUL3, 2 molecules of KEAP1, and RBX1. Interacts with NFE2L2/NRF2; the interaction is direct. Forms a ternary complex with NFE2L2/NRF2 and PGAM5. Interacts with (phosphorylated) SQSTM1/p62; the interaction is direct and inactivates the BCR(KEAP1) complex by sequestering it in inclusion bodies, promoting its degradation. Interacts with NFE2L1. Interacts with BPTF and PTMA. Interacts with MAP1LC3B. Interacts indirectly with ENC1. Interacts with SESN1 and SESN2. Interacts with HSP90AA1 and HSP90AB1. Interacts with PGCKA1; this interaction prevents the ubiquitination of KEAP1 by TRIM25, thus protecting KEAP1 from degradation. In terms of processing, non-enzymatic covalent modifications of reactive cysteines by electrophile metabolites inactivate the BCR(KEAP1) complex. Accumulation of fumarate promotes the formation of cysteine S-succination (S-(2-succinyl)cysteine), leading to inactivate the BCR(KEAP1) complex and promote NFE2L2/NRF2 nuclear accumulation and activation. Nitric oxide-dependent 8-Nitro-cGMP formation promotes cysteine guanylation (S-cGMP-cysteine), leading to NFE2L2/NRF2 nuclear accumulation and activation. Itaconate, an anti-inflammatory metabolite generated in response to lipopolysaccharide, alkylates cysteines, activating NFE2L2/NRF2. Methylglyoxal, a reactive metabolite that accumulates when the glycolytic enzyme PGK1 is inhibited, promotes formation of a methylimidazole cross-link between proximal Cys-151 and Arg-135 on another KEAP1 molecule, resulting in an inactive dimer that inactivates the BCR(KEAP1) complex. Post-translationally, degraded via a proteasomal-independent process during selective autophagy: interaction with phosphorylated SQSTM1/p62 sequesters KEAP1 in inclusion bodies, leading to its degradation. Auto-ubiquitinated by the BCR(KEAP1) complex. Quinone-induced oxidative stress, but not sulforaphane, increases its ubiquitination. Ubiquitination and subsequent degradation is most pronounced following prolonged exposure of cells to oxidative stress, particularly in glutathione-deficient cells that are highly susceptible to oxidative stress. Deubiquitinated by USP25; leading to stabilization. Ubiquitinated by TRIM25; leading to degradation upon ER stress.

It is found in the cytoplasm. Its subcellular location is the nucleus. It participates in protein modification; protein ubiquitination. Ubiquitin ligase activity of the BCR(KEAP1) complex is inhibited by oxidative stress and electrophile metabolites such as sulforaphane. Electrophile metabolites react with reactive cysteine residues in KEAP1 and trigger non-enzymatic covalent modifications of these cysteine residues, leading to inactivate the ubiquitin ligase activity of the BCR(KEAP1) complex. Selective autophagy also inactivates the BCR(KEAP1) complex via interaction between KEAP1 and SQSTM1/p62, which sequesters the complex in inclusion bodies and promotes its degradation. In terms of biological role, substrate-specific adapter of a BCR (BTB-CUL3-RBX1) E3 ubiquitin ligase complex that regulates the response to oxidative stress by targeting NFE2L2/NRF2 for ubiquitination. KEAP1 acts as a key sensor of oxidative and electrophilic stress: in normal conditions, the BCR(KEAP1) complex mediates ubiquitination and degradation of NFE2L2/NRF2, a transcription factor regulating expression of many cytoprotective genes. In response to oxidative stress, different electrophile metabolites trigger non-enzymatic covalent modifications of highly reactive cysteine residues in KEAP1, leading to inactivate the ubiquitin ligase activity of the BCR(KEAP1) complex, promoting NFE2L2/NRF2 nuclear accumulation and expression of phase II detoxifying enzymes. In response to selective autophagy, KEAP1 is sequestered in inclusion bodies following its interaction with SQSTM1/p62, leading to inactivation of the BCR(KEAP1) complex and activation of NFE2L2/NRF2. The BCR(KEAP1) complex also mediates ubiquitination of SQSTM1/p62, increasing SQSTM1/p62 sequestering activity and degradation. The BCR(KEAP1) complex also targets BPTF and PGAM5 for ubiquitination and degradation by the proteasome. This is Kelch-like ECH-associated protein 1 from Rattus norvegicus (Rat).